The primary structure comprises 447 residues: Delta(5) fatty acid desaturase fat-4 (447 aa).

Residues 1 to 80 form the Cytochrome b5 heme-binding domain; the sequence is MVLREQEHEP…TQEPEIPDIK (80 aa). Helical transmembrane passes span 137-157, 257-277, 292-312, and 319-339; these read IFTI…PSAI, WTFM…IFVS, IYEQ…LYFL, and IMFF…VVTF.

It belongs to the fatty acid desaturase type 1 family.

It is found in the membrane. The enzyme catalyses (11Z,14Z)-eicosadienoyl-CoA + 2 Fe(II)-[cytochrome b5] + O2 + 2 H(+) = (5Z,11Z,14Z)-eicosatrienoyl-CoA + 2 Fe(III)-[cytochrome b5] + 2 H2O. The catalysed reaction is (11Z,14Z,17Z)-eicosatrienoyl-CoA + 2 Fe(II)-[cytochrome b5] + O2 + 2 H(+) = (5Z,11Z,14Z,17Z)-eicosatetraenoyl-CoA + 2 Fe(III)-[cytochrome b5] + 2 H2O. It catalyses the reaction (8Z,11Z,14Z,17Z)-eicosatetraenoyl-CoA + 2 Fe(II)-[cytochrome b5] + O2 + 2 H(+) = (5Z,8Z,11Z,14Z,17Z)-eicosapentaenoyl-CoA + 2 Fe(III)-[cytochrome b5] + 2 H2O. It carries out the reaction (8Z,11Z,14Z)-eicosatrienoyl-CoA + 2 Fe(II)-[cytochrome b5] + O2 + 2 H(+) = (5Z,8Z,11Z,14Z)-eicosatetraenoyl-CoA + 2 Fe(III)-[cytochrome b5] + 2 H2O. Its pathway is lipid metabolism; polyunsaturated fatty acid biosynthesis. Functionally, can function as a Delta(5) fatty acid desaturase and behaves as a (8-3) desaturase. Introduces a double bond in the fatty acid chain 5 carbons away from carboxy terminal to biosynthesize polyunsaturated fatty acids (PUFAs) endogenously (PUFAs are essential for membrane structure and many cellular and physiological processes). Acts on a variety of substrates such as dihomo-gamma-linoleoyl-CoA ((8Z,11Z,14Z)-eicosatrienoyl-CoA, 20:3n-6) to generate arachidonoyl-CoA ((5Z,8Z,11Z,14Z)-eicosatetraenoyl-CoA, 20:4n-6). Also acts on a number of other substrates, including fatty acids that do not contain a double bond at the 8 position like (11Z,14Z,17Z)-eicosatrienoyl-CoA (20:3n-3) to produce (5Z,11Z,14Z,17Z)-eicosatetraenoyl-CoA (20:4n-3). Unlike plants, Caenorhabditis elegans desaturases seem to use fatty acyl-CoAs as substrates. The polypeptide is Delta(5) fatty acid desaturase fat-4 (fat-4) (Caenorhabditis elegans).